The following is a 287-amino-acid chain: Nucleotide-binding protein Dtpsy_0831 (287 aa).

10–17 (GMSGSGKS) is an ATP binding site. 59–62 (DVRS) provides a ligand contact to GTP.

It belongs to the RapZ-like family.

Displays ATPase and GTPase activities. This is Nucleotide-binding protein Dtpsy_0831 from Acidovorax ebreus (strain TPSY) (Diaphorobacter sp. (strain TPSY)).